We begin with the raw amino-acid sequence, 103 residues long: Secreted LysM effector Mgx1LysM (103 aa).

A signal peptide spans 1–18 (MKVTTIIAALLSVAVVDA). Cystine bridges form between C31–C89 and C62–C97. In terms of domain architecture, LysM spans 37–85 (IPYVVKKGDTLTHIAHDIYKRKVGICDLAYTNHIGYNPDLIYEDQTLLI). Chitin contacts are provided by G44, T48, D75, and I77.

Belongs to the secreted LysM effector family. Forms homodimers in a chitin-independent manner through interactions at the N-termini of Mgx1LysM monomers. Homodimers are further polymerized in a chitin-dependent manner.

It localises to the secreted. It is found in the cell wall. Secreted effector that enables the plant pathogenic fungus to manipulate host defenses for successful infection. Binds chitin and suppresses the chitin-induced reactive oxygen species (ROS) burst. Chitin-induced polymerization of homodimers forms a contiguous Mg1LysM highly oligomeric super-complexe that is anchored to the chitin in the fungal cell wall to prevent hydrolysis by host chitinases. The chain is Secreted LysM effector Mgx1LysM from Zymoseptoria tritici (strain CBS 115943 / IPO323) (Speckled leaf blotch fungus).